We begin with the raw amino-acid sequence, 195 residues long: Interferon omega-2 (195 aa).

The signal sequence occupies residues 1-23 (MALLPSLLTALVVYELWPCGALG). 2 cysteine pairs are disulfide-bonded: C24–C122 and C52–C162. N-linked (GlcNAc...) asparagine glycosylation occurs at N101.

It belongs to the alpha/beta interferon family.

Its subcellular location is the secreted. This is Interferon omega-2 from Equus caballus (Horse).